Consider the following 414-residue polypeptide: uncharacterized protein (414 aa).

A signal peptide spans 1–16 (MRVILLLAFLISLTEC). The 40-residue stretch at 20–59 (SEDLALYDLVEEVGVNFYEWFDIPRDASSNQVKKAYRKLT) folds into the Myb-like 1 domain. Positions 35–99 (NFYEWFDIPR…ELREKYDNVL (65 aa)) constitute a J domain. Residues 125-145 (ILVLLFIGTIAHYLMMWAAYF) form a helical membrane-spanning segment. Residues 211–234 (MTPKEVEPEEPTEEELAQQRRQQR) are disordered. Residues 217-226 (EPEEPTEEEL) are compositionally biased toward acidic residues. In terms of domain architecture, Myb-like 2 spans 274–320 (AQKQSGATWTPDELASLVRLSTEKYPAGTPNRWEQMGRVLNRSAEDV). Residues 352–407 (KSEDDWSQAEQKAFETALQKYPKGTDERWERISEEIGSKTKKQVMVRFKQLAEMIR) form the SANT domain.

It localises to the nucleus membrane. This is an uncharacterized protein from Caenorhabditis elegans.